Here is a 699-residue protein sequence, read N- to C-terminus: 1,4-alpha-glucan-branching enzyme (699 aa).

Residues 59–60 (NE) and 88–90 (WAP) each bind substrate. Trp-104 serves as a coordination point for (1,4-alpha-D-glucosyl)n. 115-118 (DYGK) contacts substrate. (1,4-alpha-D-glucosyl)n is bound at residue Lys-140. The residue at position 170 (Tyr-170) is a Phosphotyrosine. 330-333 (EVLR) is a binding site for substrate. Asp-354 (nucleophile) is an active-site residue. Glu-409 functions as the Proton donor in the catalytic mechanism.

Belongs to the glycosyl hydrolase 13 family. GlgB subfamily. Monomer.

It catalyses the reaction Transfers a segment of a (1-&gt;4)-alpha-D-glucan chain to a primary hydroxy group in a similar glucan chain.. It participates in glycan biosynthesis; glycogen biosynthesis. In terms of biological role, glycogen-branching enzyme participates in the glycogen biosynthetic process along with glycogenin and glycogen synthase. Generates alpha-1,6-glucosidic branches from alpha-1,4-linked glucose chains, to increase solubility of the glycogen polymer. This chain is 1,4-alpha-glucan-branching enzyme (GBE1), found in Felis catus (Cat).